The sequence spans 426 residues: L-ascorbate peroxidase T, chloroplastic (426 aa).

His112 functions as the Proton acceptor in the catalytic mechanism. His241 serves as a coordination point for heme b. Thr242 provides a ligand contact to K(+). Residues 245–269 are disordered; sequence RARPDRSGWGKPETKYTKTGPGEAG. The segment covering 246–260 has biased composition (basic and acidic residues); the sequence is ARPDRSGWGKPETKY. Thr274 and Asp281 together coordinate K(+). The chain crosses the membrane as a helical span at residues 397–417; sequence YFLNIIIAIGVLVLLSTLFGG.

This sequence belongs to the peroxidase family. Ascorbate peroxidase subfamily. Heme b is required as a cofactor.

It is found in the plastid. It localises to the chloroplast thylakoid membrane. The catalysed reaction is L-ascorbate + H2O2 = L-dehydroascorbate + 2 H2O. In terms of biological role, plays a key role in hydrogen peroxide removal. In Arabidopsis thaliana (Mouse-ear cress), this protein is L-ascorbate peroxidase T, chloroplastic (APXT).